The chain runs to 364 residues: Anthranilate phosphoribosyltransferase (364 aa).

A compositionally biased stretch (polar residues) spans 1–10 (MTSGPSQPFP). The interval 1-22 (MTSGPSQPFPSASGPDDGPSWP) is disordered. 5-phospho-alpha-D-ribose 1-diphosphate contacts are provided by residues Gly101, 104 to 105 (GD), Thr109, 111 to 114 (NLST), 129 to 137 (KHGNRAASS), and Gly141. Residue Gly101 coordinates anthranilate. Ser113 contacts Mg(2+). Asn132 is a binding site for anthranilate. Arg187 contacts anthranilate. Residues Asp245 and Glu246 each coordinate Mg(2+).

It belongs to the anthranilate phosphoribosyltransferase family. In terms of assembly, homodimer. It depends on Mg(2+) as a cofactor.

It catalyses the reaction N-(5-phospho-beta-D-ribosyl)anthranilate + diphosphate = 5-phospho-alpha-D-ribose 1-diphosphate + anthranilate. It participates in amino-acid biosynthesis; L-tryptophan biosynthesis; L-tryptophan from chorismate: step 2/5. In terms of biological role, catalyzes the transfer of the phosphoribosyl group of 5-phosphorylribose-1-pyrophosphate (PRPP) to anthranilate to yield N-(5'-phosphoribosyl)-anthranilate (PRA). The sequence is that of Anthranilate phosphoribosyltransferase from Mycolicibacterium smegmatis (strain ATCC 700084 / mc(2)155) (Mycobacterium smegmatis).